Here is a 497-residue protein sequence, read N- to C-terminus: COP9 signalosome complex subunit 3 (497 aa).

The region spanning 233–408 (QAFDAFERCV…DGSPAYLTFL (176 aa)) is the PCI domain.

The protein belongs to the CSN3 family. Component of the COP9 signalosome (CSN) complex.

It localises to the cytoplasm. The protein resides in the nucleus. In terms of biological role, component of the COP9 signalosome (CSN) complex that acts as an regulator of the ubiquitin (Ubl) conjugation pathway by mediating the deneddylation of the cullin subunit of SCF-type E3 ubiquitin-protein ligase complexes. The CSN complex is involved in the regulation of the circadian clock through its control of the stability of the SCF(FWD1) complex. In Neurospora crassa (strain ATCC 24698 / 74-OR23-1A / CBS 708.71 / DSM 1257 / FGSC 987), this protein is COP9 signalosome complex subunit 3 (csn-3).